Consider the following 217-residue polypeptide: Putative 3-methyladenine DNA glycosylase (217 aa).

The 41-residue stretch at 105–145 (SHNNVYTIDTAKIKSQITDEKTQSIIIRKNRRIMKFYIPNL) folds into the RPE2 insert domain.

This sequence belongs to the DNA glycosylase MPG family.

This is Putative 3-methyladenine DNA glycosylase from Rickettsia prowazekii (strain Madrid E).